The primary structure comprises 548 residues: WAP, Kazal, immunoglobulin, Kunitz and NTR domain-containing protein 1 (548 aa).

The first 19 residues, 1–19 (MPALRPLLPLLLLLRLTSG), serve as a signal peptide directing secretion. The region spanning 26-79 (LGSHPGVCPNQLSPNLWVDAQSTCERECSRDQDCAAAEKCCINVCGLHSCVAAR) is the WAP domain. Cystine bridges form between C33–C66, C49–C70, C53–C65, C59–C75, C116–C146, C120–C139, and C128–C157. One can recognise a Kazal-like domain in the interval 108-159 (WDGQPVCRCRDRCEKEPSFTCASDGLTYYNRCYMDAEACLRGLHLHIVPCKH). Residues 164–184 (PPSSPGPPETTARPTPGAAPV) form a disordered region. One can recognise an Ig-like C2-type domain in the interval 186–279 (PALYSSPSPQ…GLLRADFPLS (94 aa)). 10 disulfide bridges follow: C207/C263, C299/C351, C306/C334, C326/C347, C359/C409, C368/C392, C384/C405, C417/C489, C420/C491, and C431/C540. BPTI/Kunitz inhibitor domains follow at residues 299–351 (CLPD…QQAC) and 359–409 (CVLP…EDAC). Positions 409–540 (CPVPRTPPCR…ILELLEKQAC (132 aa)) constitute an NTR domain. N493 carries N-linked (GlcNAc...) asparagine glycosylation.

It belongs to the WFIKKN family. Expressed in pancreas, kidney, liver, placenta, and lung.

Its subcellular location is the secreted. Protease-inhibitor that contains multiple distinct protease inhibitor domains. Probably has serine protease- and metalloprotease-inhibitor activity. The protein is WAP, Kazal, immunoglobulin, Kunitz and NTR domain-containing protein 1 (WFIKKN1) of Homo sapiens (Human).